Here is a 498-residue protein sequence, read N- to C-terminus: Putrescine N-hydroxylase (498 aa).

Positions 23, 43, 45, 50, 51, and 62 each coordinate FAD. The NADP(+) site is built by glutamine 62 and arginine 104. Valine 127 provides a ligand contact to FAD. The NADP(+) site is built by serine 207, arginine 231, tyrosine 275, and leucine 309. Residues asparagine 386, proline 397, and leucine 399 each coordinate FAD. The span at 443 to 474 (LESNTHSAVTPSKTRQGLNPSAKSVQQPSIEP) shows a compositional bias: polar residues. The segment at 443 to 498 (LESNTHSAVTPSKTRQGLNPSAKSVQQPSIEPQTALRIAPTGGNVSALMAPNKEAQ) is disordered.

It belongs to the lysine N(6)-hydroxylase/L-ornithine N(5)-oxygenase family. The cofactor is FAD.

The enzyme catalyses putrescine + NADPH + O2 = N-hydroxyputrescine + NADP(+) + H2O. It participates in siderophore biosynthesis. N-hydroxylating monooxygenase involved in the biosynthesis of the siderophore putrebactin. Catalyzes the N-hydroxylation of the aliphatic diamine putrescine into N-hydroxyputrescine (NHP). This Shewanella oneidensis (strain ATCC 700550 / JCM 31522 / CIP 106686 / LMG 19005 / NCIMB 14063 / MR-1) protein is Putrescine N-hydroxylase.